The chain runs to 251 residues: Protein PBMUCL2 (251 aa).

The signal sequence occupies residues 1-22 (MPRYVPLLLLLLLLRCSERGGG). 2 disordered regions span residues 36-55 (WRDG…DRAS) and 65-251 (LSQS…THLL). Basic and acidic residues predominate over residues 72-87 (KHPETSPKDSRIREND). An N-linked (GlcNAc...) asparagine glycan is attached at Asn-120. A compositionally biased stretch (polar residues) spans 150-164 (TKDSVTADPGTTENF). A 15 X 11 AA approximate repeats region spans residues 153-251 (SVTADPGTTE…TTKHGDTHLL (99 aa)). The segment covering 241 to 251 (ETTKHGDTHLL) has biased composition (basic and acidic residues).

In terms of tissue distribution, detected in the brain, lung, spleen, thymus and prostate.

It localises to the secreted. The chain is Protein PBMUCL2 (HCG22) from Homo sapiens (Human).